The primary structure comprises 95 residues: MRFILNLQFFASKKGVGSTKNGRDSESKRLGAKKADGQFANAGSIIFRQRGTKIHPGQNVGRGGDDTLFALVSGIVKYEKFGKGRTRVKVVAPAE.

The propeptide occupies 1–10 (MRFILNLQFF).

Belongs to the bacterial ribosomal protein bL27 family. The N-terminus is cleaved by ribosomal processing cysteine protease Prp.

The protein is Large ribosomal subunit protein bL27 of Mesoplasma florum (strain ATCC 33453 / NBRC 100688 / NCTC 11704 / L1) (Acholeplasma florum).